A 174-amino-acid chain; its full sequence is NADH-quinone oxidoreductase subunit B 2 (174 aa).

Residues Cys-38, Cys-39, Cys-104, and Cys-133 each contribute to the [4Fe-4S] cluster site.

This sequence belongs to the complex I 20 kDa subunit family. As to quaternary structure, NDH-1 is composed of 14 different subunits. Subunits NuoB, C, D, E, F, and G constitute the peripheral sector of the complex. [4Fe-4S] cluster serves as cofactor.

It is found in the cell membrane. The enzyme catalyses a quinone + NADH + 5 H(+)(in) = a quinol + NAD(+) + 4 H(+)(out). In terms of biological role, NDH-1 shuttles electrons from NADH, via FMN and iron-sulfur (Fe-S) centers, to quinones in the respiratory chain. The immediate electron acceptor for the enzyme in this species is believed to be ubiquinone. Couples the redox reaction to proton translocation (for every two electrons transferred, four hydrogen ions are translocated across the cytoplasmic membrane), and thus conserves the redox energy in a proton gradient. In Chloroflexus aurantiacus (strain ATCC 29366 / DSM 635 / J-10-fl), this protein is NADH-quinone oxidoreductase subunit B 2.